We begin with the raw amino-acid sequence, 24 residues long: Ascaphin-2 (24 aa).

As to expression, expressed by the skin glands.

It localises to the secreted. Its function is as follows. Antimicrobial peptide that shows higher potency against Gram-negative bacteria than against Gram-positive bacteria. Has a very week hemolytic activity. The sequence is that of Ascaphin-2 from Ascaphus truei (Coastal tailed frog).